A 1150-amino-acid chain; its full sequence is Pyruvate carboxylase (1150 aa).

The 453-residue stretch at 3 to 455 (QIKKLLVANR…TTKFIEETPE (453 aa)) folds into the Biotin carboxylation domain. The ATP site is built by lysine 119, lysine 161, histidine 211, and glutamate 278. The region spanning 123-319 (RTTAIKADLP…IVKTQILVAA (197 aa)) is the ATP-grasp domain. The active site involves arginine 294. One can recognise a Pyruvate carboxyltransferase domain in the interval 533–802 (VLLTDTTFRD…HLRTDIEGME (270 aa)). Residue 541-545 (RDAHQ) participates in substrate binding. Positions 542, 712, 741, and 743 each coordinate Mn(2+). At lysine 712 the chain carries N6-carboxylysine. A Biotinyl-binding domain is found at 1071–1146 (KADKSNPSHI…ATGDLLIEIE (76 aa)). Lysine 1112 carries the post-translational modification N6-biotinyllysine.

Homotetramer. Biotin is required as a cofactor.

The enzyme catalyses hydrogencarbonate + pyruvate + ATP = oxaloacetate + ADP + phosphate + H(+). Catalyzes a 2-step reaction, involving the ATP-dependent carboxylation of the covalently attached biotin in the first step and the transfer of the carboxyl group to pyruvate in the second. The chain is Pyruvate carboxylase (pycA) from Staphylococcus aureus (strain Mu50 / ATCC 700699).